A 403-amino-acid polypeptide reads, in one-letter code: Acetate kinase (403 aa).

Position 13 (Asn13) interacts with Mg(2+). Position 20 (Lys20) interacts with ATP. Arg94 contacts substrate. The Proton donor/acceptor role is filled by Asp153. ATP is bound by residues 213 to 217, 288 to 290, and 336 to 340; these read HLGNG, DFR, and GIGEN. Glu390 lines the Mg(2+) pocket.

It belongs to the acetokinase family. Homodimer. It depends on Mg(2+) as a cofactor. Mn(2+) is required as a cofactor.

It localises to the cytoplasm. The enzyme catalyses acetate + ATP = acetyl phosphate + ADP. Its pathway is metabolic intermediate biosynthesis; acetyl-CoA biosynthesis; acetyl-CoA from acetate: step 1/2. Functionally, catalyzes the formation of acetyl phosphate from acetate and ATP. Can also catalyze the reverse reaction. The sequence is that of Acetate kinase from Buchnera aphidicola subsp. Schizaphis graminum (strain Sg).